Consider the following 277-residue polypeptide: tRNA (guanine-N(7)-)-methyltransferase (277 aa).

Residues 1-37 form a disordered region; sequence MAGTETGDAAGTEAPQPQKRYYRQRAHSNPMADHTLR. Position 28 is a phosphoserine (serine 28). The S-adenosyl-L-methionine site is built by glycine 85, glutamate 108, arginine 110, asparagine 141, alanine 142, and leucine 161. The active site involves aspartate 164. The alphaC helix stretch occupies residues 165–173; sequence PHFKRTKHK. Positions 239 and 241 each coordinate S-adenosyl-L-methionine. Residues 239-247 are alpha6 helix; it reads TEEGKKVLR.

This sequence belongs to the class I-like SAM-binding methyltransferase superfamily. TrmB family. As to quaternary structure, catalytic component of the METTL1-WDR4 complex, composed of METTL1 and WDR4. In terms of processing, phosphorylation at Ser-28 by PKB/AKT1 inactivates its methyltransferase activity via a steric interference mechanism in the active site that locally disrupts the catalytic center. Phosphorylation at Ser-28 does not affect the interaction with WDR4.

It is found in the nucleus. It catalyses the reaction guanosine(46) in tRNA + S-adenosyl-L-methionine = N(7)-methylguanosine(46) in tRNA + S-adenosyl-L-homocysteine. The enzyme catalyses a guanosine in mRNA + S-adenosyl-L-methionine = an N(7)-methylguanosine in mRNA + S-adenosyl-L-homocysteine. The catalysed reaction is a guanosine in miRNA + S-adenosyl-L-methionine = an N(7)-methylguanosine in miRNA + S-adenosyl-L-homocysteine. It participates in tRNA modification; N(7)-methylguanine-tRNA biosynthesis. Functionally, catalytic component of METTL1-WDR4 methyltransferase complex that mediates the formation of N(7)-methylguanine in a subset of RNA species, such as tRNAs, mRNAs and microRNAs (miRNAs). Catalyzes the formation of N(7)-methylguanine at position 46 (m7G46) in a large subset of tRNAs that contain the 5'-RAGGU-3' motif within the variable loop. M7G46 interacts with C13-G22 in the D-loop to stabilize tRNA tertiary structure and protect tRNAs from decay. Also acts as a methyltransferase for a subset of internal N(7)-methylguanine in mRNAs. Internal N(7)-methylguanine methylation of mRNAs in response to stress promotes their relocalization to stress granules, thereby suppressing their translation. Also methylates a specific subset of miRNAs, such as let-7. N(7)-methylguanine methylation of let-7 miRNA promotes let-7 miRNA processing by disrupting an inhibitory secondary structure within the primary miRNA transcript (pri-miRNA). Acts as a regulator of embryonic stem cell self-renewal and differentiation. The sequence is that of tRNA (guanine-N(7)-)-methyltransferase from Bos taurus (Bovine).